The following is a 95-amino-acid chain: MNEVVNSGVMNIASLVVSVVVLLIGLILWFFINRASSRTNEQIELLEALLDQQKRQNALLRRLCEANEPEKADKKTIESQKSVEDEDIIRLVAER.

Residues 12-32 (IASLVVSVVVLLIGLILWFFI) form a helical membrane-spanning segment.

The protein localises to the cell membrane. This is an uncharacterized protein from Escherichia coli O157:H7.